A 324-amino-acid polypeptide reads, in one-letter code: tRNA dimethylallyltransferase (324 aa).

Position 17–24 (17–24 (GPTASGKT)) interacts with ATP. A substrate-binding site is contributed by 19–24 (TASGKT). Interaction with substrate tRNA stretches follow at residues 42 to 45 (DSAL), 166 to 170 (QRIQR), and 251 to 256 (RCVGYR).

It belongs to the IPP transferase family. As to quaternary structure, monomer. Mg(2+) is required as a cofactor.

It carries out the reaction adenosine(37) in tRNA + dimethylallyl diphosphate = N(6)-dimethylallyladenosine(37) in tRNA + diphosphate. Functionally, catalyzes the transfer of a dimethylallyl group onto the adenine at position 37 in tRNAs that read codons beginning with uridine, leading to the formation of N6-(dimethylallyl)adenosine (i(6)A). The protein is tRNA dimethylallyltransferase of Burkholderia pseudomallei (strain 1106a).